A 153-amino-acid chain; its full sequence is UPF0127 protein TGAM_1372 (153 aa).

The protein belongs to the UPF0127 family.

This Thermococcus gammatolerans (strain DSM 15229 / JCM 11827 / EJ3) protein is UPF0127 protein TGAM_1372.